The chain runs to 440 residues: Protein ABHD8 (440 aa).

The interval 123 to 158 (DPAGSDGRSAPGSGSGSGSGSGSGGRRRRARRPKRT) is disordered. A compositionally biased stretch (low complexity) spans 124 to 134 (PAGSDGRSAPG). A compositionally biased stretch (gly residues) spans 135 to 146 (SGSGSGSGSGSG). The span at 147–158 (GRRRRARRPKRT) shows a compositional bias: basic residues. Residues 178–280 (VLFFIHGVGG…HKVIMINGGG (103 aa)) form the AB hydrolase-1 domain. Active-site charge relay system residues include S253, D371, and H399.

It belongs to the AB hydrolase superfamily. As to quaternary structure, interacts with NLRP3 (via NACHT and LLR domains); this interaction is enhanced in the presence of NLRP3 inflammasome inducers, such as ATP, nigericin, silica, or alum. Interacts with ZDHHC12.

It is found in the cytoplasm. Functionally, negatively regulates NLRP3-driven inflammation. Promotes NLRP3 degradation through the chaperone-mediated autophagy (CMA) pathway, hence attenuating inflammasome activation and IL1B secretion. Acts by recruiting palmitoyltransferase ZDHHC12 to NLRP3, facilitating NLRP3 palmitoylation and subsequent degradation. The protein is Protein ABHD8 of Macaca fascicularis (Crab-eating macaque).